Reading from the N-terminus, the 122-residue chain is Small ribosomal subunit protein uS13 (122 aa).

Positions 93 to 122 (RKGLPVRGQTTKNNARTRKGKRKTVGSASK) are disordered. The segment covering 107 to 116 (ARTRKGKRKT) has biased composition (basic residues).

It belongs to the universal ribosomal protein uS13 family. In terms of assembly, part of the 30S ribosomal subunit. Forms a loose heterodimer with protein S19. Forms two bridges to the 50S subunit in the 70S ribosome.

Located at the top of the head of the 30S subunit, it contacts several helices of the 16S rRNA. In the 70S ribosome it contacts the 23S rRNA (bridge B1a) and protein L5 of the 50S subunit (bridge B1b), connecting the 2 subunits; these bridges are implicated in subunit movement. Contacts the tRNAs in the A and P-sites. In Wolinella succinogenes (strain ATCC 29543 / DSM 1740 / CCUG 13145 / JCM 31913 / LMG 7466 / NCTC 11488 / FDC 602W) (Vibrio succinogenes), this protein is Small ribosomal subunit protein uS13.